We begin with the raw amino-acid sequence, 714 residues long: ATP-dependent zinc metalloprotease FtsH (714 aa).

Residues 1–75 lie on the Cytoplasmic side of the membrane; sequence MEKPRRLRPR…KNPMEPRQQQ (75 aa). Residues 76–96 form a helical membrane-spanning segment; it reads FSLWYVLVTILAMLAIQTLFV. Topologically, residues 97-188 are periplasmic; sequence SGHVETIPYS…FVGQPDNKWL (92 aa). Residues 189–209 form a helical membrane-spanning segment; the sequence is STILSWVVPAVIFFGIWSFLI. Residues 210 to 714 are Cytoplasmic-facing; sequence KRVGGAAGSM…GKPDQKTQGT (505 aa). ATP is bound at residue 280 to 287; sequence GAPGTGKT. Residue His502 coordinates Zn(2+). Glu503 is a catalytic residue. Zn(2+)-binding residues include His506 and Asp579. Residues 688–714 are disordered; sequence PMPPPKPVANIEESTATGKPDQKTQGT. Over residues 699–714 the composition is skewed to polar residues; that stretch reads EESTATGKPDQKTQGT.

This sequence in the central section; belongs to the AAA ATPase family. The protein in the C-terminal section; belongs to the peptidase M41 family. As to quaternary structure, homohexamer. The cofactor is Zn(2+).

Its subcellular location is the cell inner membrane. In terms of biological role, acts as a processive, ATP-dependent zinc metallopeptidase for both cytoplasmic and membrane proteins. Plays a role in the quality control of integral membrane proteins. The sequence is that of ATP-dependent zinc metalloprotease FtsH from Ralstonia pickettii (strain 12J).